A 306-amino-acid polypeptide reads, in one-letter code: Shugoshin (306 aa).

A coiled-coil region spans residues 28 to 75 (NFKSTNESLIKKNLQLKQQLSQCTKALEKLRNENIALREQNQELIDAT). 2 disordered regions span residues 122–196 (PEPS…GRRS) and 223–306 (IAPS…DTFF). Residues 133 to 161 (PKMECNLEKLDESPVRNFPRSDYEEENKS) are compositionally biased toward basic and acidic residues. Positions 167 to 181 (NGPSSSSSMTQNLEN) are enriched in polar residues. A compositionally biased stretch (pro residues) spans 230–241 (GGPPKKAPPRKA).

The protein belongs to the shugoshin family.

The protein localises to the nucleus. Its subcellular location is the chromosome. It localises to the centromere. Functionally, plays a central role in chromosome cohesion during cell division by preventing premature dissociation of cohesin complex from centromeres after prophase, when most of cohesin complex dissociates from chromosomes arms. The sequence is that of Shugoshin (sgo-1) from Caenorhabditis briggsae.